A 1238-amino-acid polypeptide reads, in one-letter code: Inner capsid protein VP2 (1238 aa).

The segment at 1 to 35 is disordered; it reads MSTSAKKTPESKTEDKIEPVIEQTSNDKPEPPPNK. Basic and acidic residues predominate over residues 7–30; that stretch reads KTPESKTEDKIEPVIEQTSNDKPE.

The protein belongs to the turreted BTV-fold inner capsid family. Homodecamer; each decamer is made up of two conformers of VP2, called VP2A and VP2B. 12 homodecamers assemble to form an icosahedral capsid.

The protein localises to the virion. In terms of biological role, inner capsid protein that self-assembles to form an icosahedral capsid with a T=2 symmetry, which consists of 120 copies of VP2, with channels at each of its five-fold vertices. This capsid constitutes the innermost concentric layer of the viral mature particle. The chain is Inner capsid protein VP2 (S2) from Cryphonectria parasitica (Chestnut blight fungus).